The following is a 364-amino-acid chain: DNA polymerase IV (364 aa).

The 185-residue stretch at 14 to 198 folds into the UmuC domain; that stretch reads IIHIDMDAFF…LPIEKFHGVG (185 aa). Mg(2+)-binding residues include aspartate 18 and aspartate 116. The active site involves glutamate 117.

This sequence belongs to the DNA polymerase type-Y family. Monomer. Requires Mg(2+) as cofactor.

It localises to the cytoplasm. The catalysed reaction is DNA(n) + a 2'-deoxyribonucleoside 5'-triphosphate = DNA(n+1) + diphosphate. Functionally, poorly processive, error-prone DNA polymerase involved in untargeted mutagenesis. Copies undamaged DNA at stalled replication forks, which arise in vivo from mismatched or misaligned primer ends. These misaligned primers can be extended by PolIV. Exhibits no 3'-5' exonuclease (proofreading) activity. May be involved in translesional synthesis, in conjunction with the beta clamp from PolIII. This chain is DNA polymerase IV, found in Streptococcus pyogenes serotype M28 (strain MGAS6180).